Consider the following 335-residue polypeptide: Capsular polysaccharide phosphotransferase WcwK (335 aa).

Belongs to the stealth family.

This chain is Capsular polysaccharide phosphotransferase WcwK (wcwK), found in Streptococcus pneumoniae.